The sequence spans 372 residues: MSAFVNIDAQRIPVALSHQPYEVVIGGEGLRGVGKELRRAGLKEGIKVLVVSNADVAEPYGDLCLQSLSDSGYRPTLLVIEAGEDQKTPVSVALIHDAAYEAKLERGSLMVALGGGVVGDMTGFAAATWLRGISVVQLPTTLLAMVDAAIGGKTGVNHPGGKNLIGAFHQPRLVLIDPSTLNTLPEREFRAGMAEVIKYGVIGDAALFQLLEGIPELNTPSQLHADLLEKILERSALAKSRVVSSDEREGGLRAILNYGHTFGHVVETLCGYGTWLHGEAVAIGMVAVGELAVLRQSWNRDDANRQKSLIAKAGLPIAWPKLDPEEVLYTLQGDKKVKDGKLRFVIPTGIGNVEIKNDVSREEIRKCLSELS.

Residues 116-120 (GVVGD), 140-141 (TT), lysine 153, lysine 162, and 180-183 (TLNT) contribute to the NAD(+) site. Zn(2+) contacts are provided by glutamate 195, histidine 260, and histidine 277.

This sequence belongs to the sugar phosphate cyclases superfamily. Dehydroquinate synthase family. The cofactor is Co(2+). Zn(2+) serves as cofactor. NAD(+) is required as a cofactor.

It localises to the cytoplasm. The enzyme catalyses 7-phospho-2-dehydro-3-deoxy-D-arabino-heptonate = 3-dehydroquinate + phosphate. The protein operates within metabolic intermediate biosynthesis; chorismate biosynthesis; chorismate from D-erythrose 4-phosphate and phosphoenolpyruvate: step 2/7. In terms of biological role, catalyzes the conversion of 3-deoxy-D-arabino-heptulosonate 7-phosphate (DAHP) to dehydroquinate (DHQ). This is 3-dehydroquinate synthase from Prochlorococcus marinus (strain MIT 9303).